We begin with the raw amino-acid sequence, 1088 residues long: Protocadherin-19 (1088 aa).

The N-terminal stretch at 1-24 is a signal peptide; sequence MHSKDMDFVQMFVCFLLCWTGVDA. The Extracellular segment spans residues 25 to 678; it reads VFNLKYTVEE…QEQIGPVNLS (654 aa). Cadherin domains are found at residues 31–130, 131–239, 240–347, 351–454, 455–563, and 569–676; these read TVEE…APRF, PTNH…NPVF, DEPV…APEI, SENS…PPYF, TKPH…TPVM, and VNGT…GPVN. Residues Glu-34 and Glu-35 each coordinate Ca(2+). Residue Asn-44 is glycosylated (N-linked (GlcNAc...) asparagine). Ca(2+) is bound by residues Asp-89 and Asp-91. Cys-94 and Cys-100 form a disulfide bridge. Residues Asp-122, Val-123, Asn-124, Asp-125, Asn-126, Glu-141, Asp-156, Asp-158, Asn-162, Glu-200, Asp-213, Asp-231, Ser-232, Asn-233, Asp-234, Asn-235, and Glu-250 each coordinate Ca(2+). Asn-262 carries N-linked (GlcNAc...) asparagine glycosylation. Asp-265, Asp-267, and Asn-271 together coordinate Ca(2+). An N-linked (GlcNAc...) asparagine glycan is attached at Asn-284. Residues Asp-306, Glu-308, Asp-339, Ile-340, Asn-341, Asp-342, Asn-343, Glu-361, and Asp-376 each coordinate Ca(2+). Asn-377 is a glycosylation site (N-linked (GlcNAc...) asparagine). Ca(2+)-binding residues include Asp-378, Asn-382, Asp-413, and Glu-415. Asn-421 is a glycosylation site (N-linked (GlcNAc...) asparagine). The Ca(2+) site is built by Asp-428, Asp-446, Glu-447, Asn-448, Asp-449, Asn-450, Glu-465, Asp-480, Asp-482, Asn-486, Asn-522, Glu-524, and Asp-537. Asn-486 carries N-linked (GlcNAc...) asparagine glycosylation. A glycan (N-linked (GlcNAc...) asparagine) is linked at Asn-546. 5 residues coordinate Ca(2+): Asp-555, Val-556, Asn-557, Asp-558, and Asn-559. N-linked (GlcNAc...) asparagine glycosylation occurs at Asn-570. The Ca(2+) site is built by Asp-594, Asp-596, Asn-600, and Asp-646. N-linked (GlcNAc...) asparagine glycosylation occurs at Asn-676. A helical transmembrane segment spans residues 679 to 699; the sequence is LIFIIALGSIAVILFVTMIFV. The Cytoplasmic portion of the chain corresponds to 700–1088; sequence AVKCKRDNKE…GSKRLKDIVL (389 aa). 4 disordered regions span residues 792 to 813, 851 to 875, 970 to 1032, and 1067 to 1088; these read NSRNAAPNHGYHHTFTGQGPQQ, DMEGNSLKDSGHEESDQTDSEHDVQ, TFGK…ASST, and TLLQDGRDKESPGSKRLKDIVL. A compositionally biased stretch (basic and acidic residues) spans 859–875; it reads DSGHEESDQTDSEHDVQ. The span at 1071–1088 shows a compositional bias: basic and acidic residues; that stretch reads DGRDKESPGSKRLKDIVL.

In terms of assembly, homodimer; antiparallel. Interacts with cadherin cdh2; the interaction confers robust cell adhesion activity on pcdh19. In the embryo, strongly expressed in the developing nervous system. At 12 hours post fertilization (hpf), shows a segmental expression pattern in the anterior third of the neural keel with strong expression in the presumptive forebrain, cerebellum/rhombomere 1 and rhombomere 4. By 24 hpf, expressed widely in the brain and spinal cord with higher expression levels in the ventral telencephalon, dorsal and central thalamus, optic tectum, central tegmentum, cerebellum and dorsolateral regions of the hindbrain. As development proceeds, expression becomes restricted to the dorsal and/or lateral regions of the central nervous system. Not detected in the spinal cord of two- and three-day old embryos. Expressed in the eye primordium, developing retina, lens and otic vesicle. Expressed in the larval optic tectum at 4 days post-fertilization where it localizes in discrete columns of neurons. Expressed throughout the adult brain with strong expression in the ventromedial telencephalon, periventricular regions of the thalamus and anterior hypothalamus, stratum periventriculare of the optic tectum, dorsal tegmental nucleus, granular regions of the cerebellar body and valvula, and superficial layers of the facial and vagal lobes.

The protein resides in the cell membrane. Functionally, calcium-dependent cell-adhesion protein. Essential for the early stages of neurulation in the anterior neural plate. Shows little cell adhesion activity on its own but exhibits robust homophilic cell adhesion when in a complex with cadherin cdh2 and appears to mediate the adhesion while cdh2 acts as a cell adhesion cofactor in the complex. Functions with cdh2 to coordinate cell adhesion and cell movements during neurulation. Contributes to neural progenitor cell patterning with cdh2 by promoting homophilic cell interactions. Regulates the columnar organization of neurons in the optic tectum. This is Protocadherin-19 from Danio rerio (Zebrafish).